A 255-amino-acid polypeptide reads, in one-letter code: Ribonuclease HII (255 aa).

One can recognise an RNase H type-2 domain in the interval 72–255; that stretch reads NYIAGVDEAG…RLSFVKNFVE (184 aa). A divalent metal cation contacts are provided by aspartate 78, glutamate 79, and aspartate 170.

This sequence belongs to the RNase HII family. The cofactor is Mn(2+). Mg(2+) is required as a cofactor.

The protein resides in the cytoplasm. It catalyses the reaction Endonucleolytic cleavage to 5'-phosphomonoester.. Its function is as follows. Endonuclease that specifically degrades the RNA of RNA-DNA hybrids. The sequence is that of Ribonuclease HII from Ruminiclostridium cellulolyticum (strain ATCC 35319 / DSM 5812 / JCM 6584 / H10) (Clostridium cellulolyticum).